A 396-amino-acid polypeptide reads, in one-letter code: Phosphoglycerate kinase (396 aa).

Residues D21–N23, R36, H59–K62, R119, and R156 each bind substrate. Residues K206, G294, E325, and G352–S355 each bind ATP.

The protein belongs to the phosphoglycerate kinase family. Monomer.

It localises to the cytoplasm. It carries out the reaction (2R)-3-phosphoglycerate + ATP = (2R)-3-phospho-glyceroyl phosphate + ADP. The protein operates within carbohydrate degradation; glycolysis; pyruvate from D-glyceraldehyde 3-phosphate: step 2/5. In Listeria monocytogenes serovar 1/2a (strain ATCC BAA-679 / EGD-e), this protein is Phosphoglycerate kinase.